The following is a 291-amino-acid chain: Protein CMSS1 (291 aa).

Residues 1–96 (MADDLGDEWW…KKTITDVLTS (96 aa)) are disordered. Residues 17-27 (DVPEVEEETEH) show a composition bias toward acidic residues. Positions 58 to 79 (VKKECFITQERSEEKPDNESNK) are enriched in basic and acidic residues.

This sequence belongs to the CMS1 family.

In Danio rerio (Zebrafish), this protein is Protein CMSS1 (cmss1).